Consider the following 230-residue polypeptide: Aspartate and serine-rich protein (230 aa).

3 N-linked (GlcNAc...) asparagine glycosylation sites follow: Asn-17, Asn-132, and Asn-139. The tract at residues 112–230 is disordered; that stretch reads LNGGATAGGV…DSDSNDTDSD (119 aa). Positions 126-140 are enriched in acidic residues; that stretch reads DTDESSNDTDEDSND. Over residues 141–161 the composition is skewed to basic and acidic residues; sequence SDSKDTDSDSKDTDSDSKDSD. Asn-163 and Asn-170 each carry an N-linked (GlcNAc...) asparagine glycan. The segment covering 173-223 has biased composition (basic and acidic residues); sequence DSKDTDSDSKDSDSKDTDSDSKDTDSDSKDSDSKDTDSDSKDTDSDSKDSD. N-linked (GlcNAc...) asparagine glycosylation is present at Asn-225.

Component of the acid-insoluble organic matrix of calcified layers of the shell (at protein level).

Its subcellular location is the secreted. The protein is Aspartate and serine-rich protein of Lottia gigantea (Giant owl limpet).